Consider the following 179-residue polypeptide: UPF0302 protein EF_1554 (179 aa).

It belongs to the UPF0302 family.

The polypeptide is UPF0302 protein EF_1554 (Enterococcus faecalis (strain ATCC 700802 / V583)).